The sequence spans 294 residues: Ribosomal protein L11 methyltransferase (294 aa).

S-adenosyl-L-methionine-binding residues include Thr-145, Gly-166, Asp-188, and Asn-227.

Belongs to the methyltransferase superfamily. PrmA family.

The protein localises to the cytoplasm. It catalyses the reaction L-lysyl-[protein] + 3 S-adenosyl-L-methionine = N(6),N(6),N(6)-trimethyl-L-lysyl-[protein] + 3 S-adenosyl-L-homocysteine + 3 H(+). Its function is as follows. Methylates ribosomal protein L11. The chain is Ribosomal protein L11 methyltransferase from Hydrogenovibrio crunogenus (strain DSM 25203 / XCL-2) (Thiomicrospira crunogena).